The chain runs to 328 residues: Interleukin-12 subunit beta (328 aa).

The first 22 residues, 1–22 (MCHQQLVISWFSLVFLASPLMA), serve as a signal peptide directing secretion. An Ig-like C2-type domain is found at 29 to 106 (DVYVVELDWY…LSHSLLLLHK (78 aa)). Residues Cys50 and Cys90 are joined by a disulfide bond. Asn125, Asn135, Asn222, and Asn303 each carry an N-linked (GlcNAc...) asparagine glycan. In terms of domain architecture, Fibronectin type-III spans 237 to 328 (PPKNLQLKPL…WSEWASVPCS (92 aa)).

This sequence belongs to the IL-12B family. Heterodimer with IL12A; disulfide-linked. The heterodimer is known as interleukin IL-12. Heterodimer with IL23A; disulfide-linked. The heterodimer is known as interleukin IL-23. Also secreted as a monomer. Interacts with NBR1; this interaction promotes IL-12 secretion.

It localises to the secreted. Cytokine that can act as a growth factor for activated T and NK cells, enhance the lytic activity of NK/lymphokine-activated killer cells, and stimulate the production of IFN-gamma by resting PBMC. Functionally, associates with IL23A to form the IL-23 interleukin, a heterodimeric cytokine which functions in innate and adaptive immunity. IL-23 may constitute with IL-17 an acute response to infection in peripheral tissues. IL-23 binds to a heterodimeric receptor complex composed of IL12RB1 and IL23R, activates the Jak-Stat signaling cascade, stimulates memory rather than naive T-cells and promotes production of pro-inflammatory cytokines. IL-23 induces autoimmune inflammation and thus may be responsible for autoimmune inflammatory diseases and may be important for tumorigenesis. The polypeptide is Interleukin-12 subunit beta (IL12B) (Papio anubis (Olive baboon)).